The chain runs to 139 residues: Putative pre-16S rRNA nuclease (139 aa).

This sequence belongs to the YqgF nuclease family.

The protein resides in the cytoplasm. Functionally, could be a nuclease involved in processing of the 5'-end of pre-16S rRNA. This is Putative pre-16S rRNA nuclease from Pectobacterium atrosepticum (strain SCRI 1043 / ATCC BAA-672) (Erwinia carotovora subsp. atroseptica).